A 351-amino-acid chain; its full sequence is Putative F-box protein At5g52610 (351 aa).

Residues 1–41 form the F-box domain; that stretch reads MISEDLLVEILLRLPVKPLARCLCVCKLWATIIRSRYFINL.

In Arabidopsis thaliana (Mouse-ear cress), this protein is Putative F-box protein At5g52610.